Here is a 375-residue protein sequence, read N- to C-terminus: MIGLLIGGVLGLVLSAAGTPLFIRFLVKRGYGQFVRDDGPTTHKTKRGTPTMGGAVIIGSLVLAYLITHGLLAVLGVDFGGPTASGLILLLLTVGMAFVGFVDDFTKITKQRSLGLTPRGKIILQALIGTAFAVLALNFPDERGLTPASTAISFARDIPWLDLAFAGPAIGVILFVIWSNLITTATTNAVNLTDGLDGLATGATAMITGAYVLISLFQSSQSCALEGTRGCYEVRDPMDLALLAAILTGSLLGFLWWNTSPAKIFMGDTGSLGLGGALAGFAIFTRTEILVAVLAGLMVAITLSVIIQVGWFKVSGGKRVFLMAPLQHHFELKGWAEVTVVVRFWLLSLMCVTVGLAIFYGDWLIRQGGLAGVTP.

Helical transmembrane passes span 2-22 (IGLL…TPLF), 55-75 (AVII…LAVL), 82-102 (PTAS…VGFV), 120-140 (GKII…LNFP), 158-178 (IPWL…FVIW), 198-218 (GLAT…SLFQ), 237-257 (PMDL…FLWW), 264-284 (IFMG…FAIF), 289-309 (ILVA…IIQV), and 345-365 (WLLS…DWLI).

The protein belongs to the glycosyltransferase 4 family. MraY subfamily. Mg(2+) is required as a cofactor.

The protein localises to the cell membrane. The catalysed reaction is UDP-N-acetyl-alpha-D-muramoyl-L-alanyl-gamma-D-glutamyl-meso-2,6-diaminopimeloyl-D-alanyl-D-alanine + di-trans,octa-cis-undecaprenyl phosphate = di-trans,octa-cis-undecaprenyl diphospho-N-acetyl-alpha-D-muramoyl-L-alanyl-D-glutamyl-meso-2,6-diaminopimeloyl-D-alanyl-D-alanine + UMP. The protein operates within cell wall biogenesis; peptidoglycan biosynthesis. Its function is as follows. Catalyzes the initial step of the lipid cycle reactions in the biosynthesis of the cell wall peptidoglycan: transfers peptidoglycan precursor phospho-MurNAc-pentapeptide from UDP-MurNAc-pentapeptide onto the lipid carrier undecaprenyl phosphate, yielding undecaprenyl-pyrophosphoryl-MurNAc-pentapeptide, known as lipid I. This is Phospho-N-acetylmuramoyl-pentapeptide-transferase from Micrococcus luteus (strain ATCC 4698 / DSM 20030 / JCM 1464 / CCM 169 / CCUG 5858 / IAM 1056 / NBRC 3333 / NCIMB 9278 / NCTC 2665 / VKM Ac-2230) (Micrococcus lysodeikticus).